A 185-amino-acid polypeptide reads, in one-letter code: Probable DNA-directed RNA polymerase subunit delta (185 aa).

An HTH HARE-type domain is found at 14-81 (LSMIEVAHAI…GDNTWGLRAW (68 aa)). Residues 90 to 185 (ATVGENEEDE…DEEDEDEDDE (96 aa)) form a disordered region. Acidic residues-rich tracts occupy residues 117-167 (DTDD…DDGI) and 175-185 (HDEEDEDEDDE).

Belongs to the RpoE family. RNAP is composed of a core of 2 alpha, a beta and a beta' subunits. The core is associated with a delta subunit and one of several sigma factors.

Participates in both the initiation and recycling phases of transcription. In the presence of the delta subunit, RNAP displays an increased specificity of transcription, a decreased affinity for nucleic acids, and an increased efficiency of RNA synthesis because of enhanced recycling. This is Probable DNA-directed RNA polymerase subunit delta from Limosilactobacillus reuteri (strain DSM 20016) (Lactobacillus reuteri).